The chain runs to 210 residues: dTTP/UTP pyrophosphatase (210 aa).

The active-site Proton acceptor is the D89.

It belongs to the Maf family. YhdE subfamily. A divalent metal cation serves as cofactor.

It is found in the cytoplasm. The enzyme catalyses dTTP + H2O = dTMP + diphosphate + H(+). The catalysed reaction is UTP + H2O = UMP + diphosphate + H(+). Functionally, nucleoside triphosphate pyrophosphatase that hydrolyzes dTTP and UTP. May have a dual role in cell division arrest and in preventing the incorporation of modified nucleotides into cellular nucleic acids. This chain is dTTP/UTP pyrophosphatase, found in Burkholderia lata (strain ATCC 17760 / DSM 23089 / LMG 22485 / NCIMB 9086 / R18194 / 383).